Reading from the N-terminus, the 616-residue chain is FAD-linked oxidoreductase cheF (616 aa).

In terms of domain architecture, FAD-binding PCMH-type spans 160 to 344 (NQGLVSPWYV…LSMTVRVEPA (185 aa)).

It belongs to the oxygen-dependent FAD-linked oxidoreductase family. The cofactor is FAD.

It functions in the pathway secondary metabolite biosynthesis. Its function is as follows. FAD-linked oxidoreductase; part of the gene cluster that mediates the biosynthesis of chaetoglobosin A which has a unique inhibitory activity against actin polymerization in mammalian cells. Chaetoglobosin A and its intermediates are involved in the morphological differentiation of C.globosum. The first step of the pathway is the synthesis of prochaetoglobosin I via condensation of one acetyl-CoA, 8 malonyl-CoA, and a L-tryptophan molecule by the PKS-NRPS hybrid synthetase cheA, followed by reduction of backbone double bond to install desired geometry by the enoyl reductase cheB. Further multiple oxidation steps performed by the cytochrome P450 monooxygenases cheE and cheG, as well as by the FAD-linked oxidoreductase cheF, lead to the formation of chaetoglobosin A. Depending on the order of action of these reductases, distinct intermediates can be identified. Within the pathway, the cytochrome P450 monooxygenase cheE catalyzes a stereospecific epoxidation on prochaetoglobosin I, cytoglobosin D, and chaetoglobosin J intermediates. The FAD-linked oxidoreductase cheF performs dehydrogenation of the C-20 hydroxyl groups in the 20-dihyrochaetoglobosin A and cytoglobosin D intermediates. Finally, the cytochrome P450 monooxygenase cheG can catalyze the stereospecific dihydroxylation of prochaetoglobosin I and prochaetoglobosin IV at C-19 and C-20, respectively. The Diels-Alderase cheD may play a role in the post-PKS-NRPS biosynthetic steps catalyzing Diels-Alder cyclization. This chain is FAD-linked oxidoreductase cheF, found in Chaetomium globosum (strain ATCC 6205 / CBS 148.51 / DSM 1962 / NBRC 6347 / NRRL 1970) (Soil fungus).